The primary structure comprises 77 residues: Large ribosomal subunit protein uL29 (77 aa).

This sequence belongs to the universal ribosomal protein uL29 family.

The chain is Large ribosomal subunit protein uL29 from Gluconobacter oxydans (strain 621H) (Gluconobacter suboxydans).